Reading from the N-terminus, the 314-residue chain is DNA-directed RNA polymerase subunit alpha (314 aa).

The interval 1 to 227 (MIEFQKPTIS…EHLALFIDLS (227 aa)) is alpha N-terminal domain (alpha-NTD). Residues 241–314 (VETVMENKEP…GQSFKQETEN (74 aa)) form an alpha C-terminal domain (alpha-CTD) region.

This sequence belongs to the RNA polymerase alpha chain family. As to quaternary structure, homodimer. The RNAP catalytic core consists of 2 alpha, 1 beta, 1 beta' and 1 omega subunit. When a sigma factor is associated with the core the holoenzyme is formed, which can initiate transcription.

It catalyses the reaction RNA(n) + a ribonucleoside 5'-triphosphate = RNA(n+1) + diphosphate. Functionally, DNA-dependent RNA polymerase catalyzes the transcription of DNA into RNA using the four ribonucleoside triphosphates as substrates. This is DNA-directed RNA polymerase subunit alpha from Oenococcus oeni (strain ATCC BAA-331 / PSU-1).